The primary structure comprises 121 residues: Small ribosomal subunit protein uS13 (121 aa).

Positions 97 to 121 are disordered; that stretch reads VRGQRTRTNARTRRGARKTVAGKKK. The segment covering 100–121 has biased composition (basic residues); sequence QRTRTNARTRRGARKTVAGKKK.

The protein belongs to the universal ribosomal protein uS13 family. As to quaternary structure, part of the 30S ribosomal subunit. Forms a loose heterodimer with protein S19. Forms two bridges to the 50S subunit in the 70S ribosome.

In terms of biological role, located at the top of the head of the 30S subunit, it contacts several helices of the 16S rRNA. In the 70S ribosome it contacts the 23S rRNA (bridge B1a) and protein L5 of the 50S subunit (bridge B1b), connecting the 2 subunits; these bridges are implicated in subunit movement. Contacts the tRNAs in the A and P-sites. In Synechococcus sp. (strain CC9311), this protein is Small ribosomal subunit protein uS13.